Reading from the N-terminus, the 120-residue chain is uncharacterized protein (120 aa).

This is an uncharacterized protein from Saccharomyces cerevisiae (strain ATCC 204508 / S288c) (Baker's yeast).